The chain runs to 341 residues: Putative ankyrin repeat protein FPV031 (341 aa).

5 ANK repeats span residues 23–55 (DRNS…FQET), 58–87 (DNLT…IINQ), 92–124 (CGNT…ITNN), 125–158 (DGFT…IRDN), and 163–195 (TGLT…YSTC).

This Fowlpox virus (strain NVSL) (FPV) protein is Putative ankyrin repeat protein FPV031 (ANK3).